The following is a 217-amino-acid chain: Glycosylphosphatidylinositol anchor biosynthesis protein 11 (217 aa).

6 helical membrane-spanning segments follow: residues 45 to 61 (TWQT…YWFI), 74 to 94 (WLLV…ATVY), 111 to 131 (VTCI…GAPF), 138 to 158 (TWLL…SVLN), 169 to 189 (YFIS…LDWD), and 195 to 215 (WPIP…TFCS).

This sequence belongs to the PIGF family.

Its subcellular location is the endoplasmic reticulum membrane. It functions in the pathway glycolipid biosynthesis; glycosylphosphatidylinositol-anchor biosynthesis. Acts in the GPI biosynthetic pathway between GlcNAc-PI synthesis and GPI transfer to protein. The chain is Glycosylphosphatidylinositol anchor biosynthesis protein 11 (GPI11) from Eremothecium gossypii (strain ATCC 10895 / CBS 109.51 / FGSC 9923 / NRRL Y-1056) (Yeast).